We begin with the raw amino-acid sequence, 283 residues long: Acetylglutamate kinase (283 aa).

Substrate is bound by residues 63–64 (GG), Arg85, and Asn178.

The protein belongs to the acetylglutamate kinase family. ArgB subfamily.

It is found in the cytoplasm. It carries out the reaction N-acetyl-L-glutamate + ATP = N-acetyl-L-glutamyl 5-phosphate + ADP. Its pathway is amino-acid biosynthesis; L-arginine biosynthesis; N(2)-acetyl-L-ornithine from L-glutamate: step 2/4. In terms of biological role, catalyzes the ATP-dependent phosphorylation of N-acetyl-L-glutamate. In Prochlorococcus marinus (strain MIT 9301), this protein is Acetylglutamate kinase.